The following is a 682-amino-acid chain: Probable potassium transport system protein Kup (682 aa).

12 helical membrane passes run 13–33 (GLLVSIGIVYGDIGTSPLYVM), 55–75 (ISLILWTITLLTTVKYVLIAL), 98–118 (WLVIPALVGGAALLADGTLTP), 138–158 (IPVPNQNSVIMITIVILLFLF), 171–191 (TFGPIMLVWFTFLGLTGIMNL), 217–237 (VGVLILGAVFLATTGAEALYS), 250–270 (SWPYVFICLALNYLGQGVWIL), 295–315 (FFAIILATLAAIIASQALITG), 344–364 (LFIPSINKMLCAATIGIVFLF), 375–395 (GLAITVTMLMTTVLLFEYLSL), 405–425 (VFLLLFGAIETMFLISSLAKF), and 428–448 (GGYVTVIIAAFIGAIMYIWYF).

It belongs to the HAK/KUP transporter (TC 2.A.72) family.

The protein localises to the cell membrane. It catalyses the reaction K(+)(in) + H(+)(in) = K(+)(out) + H(+)(out). Transport of potassium into the cell. Likely operates as a K(+):H(+) symporter. The polypeptide is Probable potassium transport system protein Kup (Lactobacillus gasseri (strain ATCC 33323 / DSM 20243 / BCRC 14619 / CIP 102991 / JCM 1131 / KCTC 3163 / NCIMB 11718 / NCTC 13722 / AM63)).